Here is an 85-residue protein sequence, read N- to C-terminus: Small ribosomal subunit protein uS17 (85 aa).

It belongs to the universal ribosomal protein uS17 family. Part of the 30S ribosomal subunit.

In terms of biological role, one of the primary rRNA binding proteins, it binds specifically to the 5'-end of 16S ribosomal RNA. This Pseudoalteromonas translucida (strain TAC 125) protein is Small ribosomal subunit protein uS17.